Reading from the N-terminus, the 120-residue chain is Large-conductance mechanosensitive channel (120 aa).

2 consecutive transmembrane segments (helical) span residues 7–27 and 64–84; these read EFAL…GAAF and GLFI…FIFV.

It belongs to the MscL family. In terms of assembly, homopentamer.

The protein resides in the cell membrane. In terms of biological role, channel that opens in response to stretch forces in the membrane lipid bilayer. May participate in the regulation of osmotic pressure changes within the cell. In Staphylococcus aureus (strain Mu3 / ATCC 700698), this protein is Large-conductance mechanosensitive channel.